Consider the following 143-residue polypeptide: Brain ribonuclease (143 aa).

The tract at residues 1–21 (KESAAAKFRRQHMDSGSSSSG) is disordered. Substrate contacts are provided by Lys7 and Arg10. Residue His12 is the Proton acceptor of the active site. Intrachain disulfides connect Cys26/Cys84, Cys40/Cys95, Cys58/Cys110, and Cys65/Cys72. 41–45 (KPVNT) is a binding site for substrate. N-linked (GlcNAc...) asparagine glycosylation occurs at Asn62. Substrate-binding residues include Lys66 and Arg85. The active-site Proton donor is His119. Residue Thr129 is glycosylated (O-linked (GalNAc...) threonine). Ser133 carries O-linked (GalNAc...) serine glycosylation.

The protein belongs to the pancreatic ribonuclease family.

The protein localises to the secreted. The chain is Brain ribonuclease (BRN) from Ovis aries (Sheep).